The primary structure comprises 725 residues: Threonine--tRNA ligase, cytoplasmic (725 aa).

In terms of domain architecture, TGS spans 80-142 (EPIQITLPDG…EGNAKLELLK (63 aa)).

This sequence belongs to the class-II aminoacyl-tRNA synthetase family.

The protein localises to the cytoplasm. The enzyme catalyses tRNA(Thr) + L-threonine + ATP = L-threonyl-tRNA(Thr) + AMP + diphosphate + H(+). The polypeptide is Threonine--tRNA ligase, cytoplasmic (Caenorhabditis elegans).